A 192-amino-acid chain; its full sequence is UPF0149 protein YgfB (192 aa).

Belongs to the UPF0149 family.

The polypeptide is UPF0149 protein YgfB (Salmonella typhi).